A 1057-amino-acid polypeptide reads, in one-letter code: Structural maintenance of chromosomes protein 6B (1057 aa).

In terms of domain architecture, Zinc-hook spans 22-1047; that stretch reads ILRIKVENFM…ISMVKSHERI (1026 aa). 49-56 lines the ATP pocket; the sequence is GQNGSGKS. The stretch at 135–448 forms a coiled coil; sequence KVSNKRDELR…NDLKKHQTNK (314 aa). A flexible hinge region spans residues 449–632; it reads VTAFGGDRVI…PPLSRRPSRL (184 aa). Residues 633–904 adopt a coiled-coil conformation; sequence CASFDDQIKD…QDHREKLMAC (272 aa). Residues 818–828 are compositionally biased toward basic and acidic residues; the sequence is KNKRKESDQKA. The disordered stretch occupies residues 818–845; that stretch reads KNKRKESDQKASEICPESEIESLGPWDG.

Belongs to the SMC family. SMC6 subfamily. As to quaternary structure, forms a heterodimer with SMC5. The SMC5-SMC6 complex is composed of the SMC5 and SMC6 heterodimer attached via their hinge domain and from the non-SMC subunit NSE4A or NSE4B. In terms of tissue distribution, expressed in seedlings, rosette leaves and floral buds.

It is found in the nucleus. It localises to the chromosome. In terms of biological role, core component of the SMC5-SMC6 complex that promotes sister chromatid alignment after DNA damage and facilitates double-stranded DNA breaks (DSBs) repair via homologous recombination between sister chromatids. This Arabidopsis thaliana (Mouse-ear cress) protein is Structural maintenance of chromosomes protein 6B (SMC6B).